We begin with the raw amino-acid sequence, 386 residues long: Succinate--CoA ligase [ADP-forming] subunit beta (386 aa).

One can recognise an ATP-grasp domain in the interval 9–244 (KELLRSYGVP…ETEEDPREVE (236 aa)). ATP is bound by residues lysine 46, 53 to 55 (GRG), glutamate 99, cysteine 102, and glutamate 107. Asparagine 199 and aspartate 213 together coordinate Mg(2+). Substrate is bound by residues asparagine 264 and 321–323 (GIM).

It belongs to the succinate/malate CoA ligase beta subunit family. As to quaternary structure, heterotetramer of two alpha and two beta subunits. The cofactor is Mg(2+).

The enzyme catalyses succinate + ATP + CoA = succinyl-CoA + ADP + phosphate. The catalysed reaction is GTP + succinate + CoA = succinyl-CoA + GDP + phosphate. Its pathway is carbohydrate metabolism; tricarboxylic acid cycle; succinate from succinyl-CoA (ligase route): step 1/1. Functionally, succinyl-CoA synthetase functions in the citric acid cycle (TCA), coupling the hydrolysis of succinyl-CoA to the synthesis of either ATP or GTP and thus represents the only step of substrate-level phosphorylation in the TCA. The beta subunit provides nucleotide specificity of the enzyme and binds the substrate succinate, while the binding sites for coenzyme A and phosphate are found in the alpha subunit. This Exiguobacterium sibiricum (strain DSM 17290 / CCUG 55495 / CIP 109462 / JCM 13490 / 255-15) protein is Succinate--CoA ligase [ADP-forming] subunit beta.